A 389-amino-acid chain; its full sequence is MLLWLAQHFQDEIGPLRVFNFITFRAVFATLTALAIGLFFGPMVIRMLQRLKVGQAVRTDGPQTHLIKSGTPTMGGALILLAIGVATLLWTDLSNRFVWVVLIVTLGFGAVGWVDDYRKVVYKDPKGMASREKYMWQSIIGLFAAVYLAFSVSAPSNSQFLDLFVAWVQSGFSMDLPPKADLIVPFFKTISYPLGVWGFIALTYFVIVGTSNAVNLTDGLDGLAIMPTVMVGTALGLFAYLTGSATYAKYLFIPHIPGAGELIIFCGAMAGAGLAFLWFNAHPAQVFMGDVGALALGGALGTIAVIVRQEIVLFIMGGVFVVETLSVMIQVAYFKYTKMRTGTGRRILLMAPLHHHFEQKGWKETQVVVRFWIITMMLVLFGLSTLKLR.

Transmembrane regions (helical) follow at residues 21–41 (FITFRAVFATLTALAIGLFFG), 70–90 (GTPTMGGALILLAIGVATLLW), 97–117 (FVWVVLIVTLGFGAVGWVDDY), 134–154 (YMWQSIIGLFAAVYLAFSVSA), 189–209 (TISYPLGVWGFIALTYFVIVG), 222–242 (GLAIMPTVMVGTALGLFAYLT), 259–279 (AGELIIFCGAMAGAGLAFLWF), 286–306 (VFMGDVGALALGGALGTIAVI), 311–331 (IVLFIMGGVFVVETLSVMIQV), and 366–386 (QVVVRFWIITMMLVLFGLSTL).

The protein belongs to the glycosyltransferase 4 family. MraY subfamily. It depends on Mg(2+) as a cofactor.

It is found in the cell inner membrane. The enzyme catalyses UDP-N-acetyl-alpha-D-muramoyl-L-alanyl-gamma-D-glutamyl-meso-2,6-diaminopimeloyl-D-alanyl-D-alanine + di-trans,octa-cis-undecaprenyl phosphate = di-trans,octa-cis-undecaprenyl diphospho-N-acetyl-alpha-D-muramoyl-L-alanyl-D-glutamyl-meso-2,6-diaminopimeloyl-D-alanyl-D-alanine + UMP. The protein operates within cell wall biogenesis; peptidoglycan biosynthesis. Its function is as follows. Catalyzes the initial step of the lipid cycle reactions in the biosynthesis of the cell wall peptidoglycan: transfers peptidoglycan precursor phospho-MurNAc-pentapeptide from UDP-MurNAc-pentapeptide onto the lipid carrier undecaprenyl phosphate, yielding undecaprenyl-pyrophosphoryl-MurNAc-pentapeptide, known as lipid I. The sequence is that of Phospho-N-acetylmuramoyl-pentapeptide-transferase from Herminiimonas arsenicoxydans.